The following is a 238-amino-acid chain: 4-hydroxy-tetrahydrodipicolinate reductase (238 aa).

Residue 12–17 (GASGRM) coordinates NAD(+). R40 is a binding site for NADP(+). NAD(+) contacts are provided by residues 93 to 95 (GTT) and 117 to 120 (ASNF). H149 serves as the catalytic Proton donor/acceptor. Residue H150 coordinates (S)-2,3,4,5-tetrahydrodipicolinate. K153 acts as the Proton donor in catalysis. (S)-2,3,4,5-tetrahydrodipicolinate is bound at residue 159–160 (GT).

It belongs to the DapB family.

The protein localises to the cytoplasm. The catalysed reaction is (S)-2,3,4,5-tetrahydrodipicolinate + NAD(+) + H2O = (2S,4S)-4-hydroxy-2,3,4,5-tetrahydrodipicolinate + NADH + H(+). It carries out the reaction (S)-2,3,4,5-tetrahydrodipicolinate + NADP(+) + H2O = (2S,4S)-4-hydroxy-2,3,4,5-tetrahydrodipicolinate + NADPH + H(+). The protein operates within amino-acid biosynthesis; L-lysine biosynthesis via DAP pathway; (S)-tetrahydrodipicolinate from L-aspartate: step 4/4. In terms of biological role, catalyzes the conversion of 4-hydroxy-tetrahydrodipicolinate (HTPA) to tetrahydrodipicolinate. This chain is 4-hydroxy-tetrahydrodipicolinate reductase, found in Xanthomonas euvesicatoria pv. vesicatoria (strain 85-10) (Xanthomonas campestris pv. vesicatoria).